Consider the following 269-residue polypeptide: Protein tio (269 aa).

Basic and acidic residues predominate over residues 1–12; sequence MANEPQEHEEGK. The segment at 1–127 is disordered; sequence MANEPQEHEE…NETKCPDEQN (127 aa). Residues 1 to 246 are Cytoplasmic-facing; the sequence is MANEPQEHEE…VEKKLTCVIC (246 aa). A compositionally biased stretch (pro residues) spans 27-41; sequence PNIPQDPTPGTPPGP. A compositionally biased stretch (low complexity) spans 61–74; the sequence is SEGPPDGSGNSSPP. Polar residues-rich tracts occupy residues 91–101 and 114–127; these read SESGGNNSAPN and AGNG…DEQN. The residue at position 136 (tyrosine 136) is a Phosphotyrosine; by host LCK. The segment at 158–167 is CSKH/LBD2; that stretch reads EEERSPFNKY. An SH3B/LBD1 region spans residues 186–195; that stretch reads IPPPQLPPRP. Residues 247–267 form a helical membrane-spanning segment; sequence LLIGILVLLILLFMLGFLFLL. Topologically, residues 268–269 are extracellular; that stretch reads MK.

Homodimer. Binds SH3 domain of host LYN, HCK, LCK, SRC, FYN or YES. When tyrosine-phosphorylated, binds to the SH2 domain of host LCK, SRC, or FYN. Post-translationally, phosphorylated by host LCK, SRC and less efficiently by FYN.

It localises to the host cell membrane. Functionally, transforms host T-cells, inducing T-cell lymphomia in the host. Activates at least SRC and LCK tyrosines kinases, thereby activating signaling pathway transforming host T-cells. Human T-cells transformed ex vivo display a IL2 indenpendent growth phenotype. This chain is Protein tio, found in Ateles (AtHV-3).